Consider the following 378-residue polypeptide: Chaperone protein DnaJ (378 aa).

Residues 5-70 (DYYEVLGLQK…EKRAMYDQYG (66 aa)) form the J domain. The segment at 135 to 213 (GVKKDIRIRT…CHGDGRVEKT (79 aa)) adopts a CR-type zinc-finger fold. Residues cysteine 148, cysteine 151, cysteine 165, cysteine 168, cysteine 187, cysteine 190, cysteine 201, and cysteine 204 each contribute to the Zn(2+) site. CXXCXGXG motif repeat units lie at residues 148 to 155 (CDTCHGSG), 165 to 172 (CPHCHGSG), 187 to 194 (CPSCHGTG), and 201 to 208 (CKSCHGDG).

Belongs to the DnaJ family. As to quaternary structure, homodimer. Requires Zn(2+) as cofactor.

The protein resides in the cytoplasm. In terms of biological role, participates actively in the response to hyperosmotic and heat shock by preventing the aggregation of stress-denatured proteins and by disaggregating proteins, also in an autonomous, DnaK-independent fashion. Unfolded proteins bind initially to DnaJ; upon interaction with the DnaJ-bound protein, DnaK hydrolyzes its bound ATP, resulting in the formation of a stable complex. GrpE releases ADP from DnaK; ATP binding to DnaK triggers the release of the substrate protein, thus completing the reaction cycle. Several rounds of ATP-dependent interactions between DnaJ, DnaK and GrpE are required for fully efficient folding. Also involved, together with DnaK and GrpE, in the DNA replication of plasmids through activation of initiation proteins. This is Chaperone protein DnaJ from Glaesserella parasuis serovar 5 (strain SH0165) (Haemophilus parasuis).